The chain runs to 222 residues: Gamma-glutamyl cyclotransferase gliK (222 aa).

2 consecutive transmembrane segments (helical) span residues 154–174 (GWWF…AAII) and 187–207 (GHVP…MWAQ).

The protein belongs to the class-I pyridoxal-phosphate-dependent aminotransferase family.

It localises to the membrane. It carries out the reaction an alpha-(gamma-L-glutamyl)-L-amino acid = 5-oxo-L-proline + an L-alpha-amino acid. It participates in secondary metabolite biosynthesis. Functionally, gamma-glutamyl cyclotransferase; part of the gene cluster that mediates the biosynthesis of an unusual class of epipolythiodioxopiperazines (ETPs) lacking the reactive thiol group important for toxicity. Firstly, L-tyrosine is prenylated by tcpD, before undergoing condensation with L-glycine in a reaction catalyzed by the NRPS tcpP leading to the diketopiperazine (DKP) backbone. Afterwards the alpha-carbon of tyrosine is oxidized by the cytochrome P450 tcpC to form a hydroxyl group. However, in contrast other ETP biosynthesis pathways studied so far, tcpC is not able to bishydroxylate the DKP at both alpha-carbon positions, but hydroxylates the alpha-carbon of the tyrosine part and the nitrogen of the glycine part. The next steps involve an alpha,beta-elimination reaction catalyzed by tcpI, a methylation by the methyltransferase tcpN the action of the four enzyme cascade tcpG/K/J/I. Due to a dysfunctional cytochrome P450 monooxygenase tcpC, the pathway leads to the biosynthesis of probable non-toxic metabolites lacking the reactive thiol group. This is Gamma-glutamyl cyclotransferase gliK from Claviceps purpurea (strain 20.1) (Ergot fungus).